We begin with the raw amino-acid sequence, 260 residues long: Phosphate import ATP-binding protein PstB (260 aa).

The ABC transporter domain maps to 14–255 (LQIRNLDFFY…PGKKQTEDYI (242 aa)). 46 to 53 (GPSGCGKS) contributes to the ATP binding site.

The protein belongs to the ABC transporter superfamily. Phosphate importer (TC 3.A.1.7) family. In terms of assembly, the complex is composed of two ATP-binding proteins (PstB), two transmembrane proteins (PstC and PstA) and a solute-binding protein (PstS).

It is found in the cell inner membrane. It carries out the reaction phosphate(out) + ATP + H2O = ADP + 2 phosphate(in) + H(+). Part of the ABC transporter complex PstSACB involved in phosphate import. Responsible for energy coupling to the transport system. This chain is Phosphate import ATP-binding protein PstB, found in Thiobacillus denitrificans (strain ATCC 25259 / T1).